Reading from the N-terminus, the 340-residue chain is 3-isopropylmalate dehydrogenase (340 aa).

Arginine 88, arginine 98, arginine 122, and aspartate 212 together coordinate substrate. Positions 212, 236, and 240 each coordinate Mg(2+). 272–284 lines the NAD(+) pocket; the sequence is GSAPDIAGQGIAD.

The protein belongs to the isocitrate and isopropylmalate dehydrogenases family. LeuB type 2 subfamily. Homodimer. Mg(2+) serves as cofactor. The cofactor is Mn(2+).

It is found in the cytoplasm. It carries out the reaction (2R,3S)-3-isopropylmalate + NAD(+) = 4-methyl-2-oxopentanoate + CO2 + NADH. Its pathway is amino-acid biosynthesis; L-leucine biosynthesis; L-leucine from 3-methyl-2-oxobutanoate: step 3/4. Catalyzes the oxidation of 3-carboxy-2-hydroxy-4-methylpentanoate (3-isopropylmalate) to 3-carboxy-4-methyl-2-oxopentanoate. The product decarboxylates to 4-methyl-2 oxopentanoate. The polypeptide is 3-isopropylmalate dehydrogenase (Corynebacterium glutamicum (strain R)).